A 1463-amino-acid chain; its full sequence is Nucleoporin NUP152 (1463 aa).

Disordered regions lie at residues 1-199 (MDPP…GRPG), 339-568 (GIPD…ELPA), and 609-1064 (TTKK…FGNT). Polar residues-rich tracts occupy residues 32 to 42 (STNSNSVTANA), 81 to 92 (GPSSKLSQSVSA), 144 to 155 (TSSKATSFSGAP), 175 to 191 (TTYT…QSFP), 367 to 378 (PSSSTFTHTASP), and 416 to 472 (PAKT…SSNI). The span at 481 to 498 (KDEDNESDTGSEAEAEDE) shows a compositional bias: acidic residues. Low complexity-rich tracts occupy residues 511 to 523 (GASS…GGES) and 616 to 630 (AAAP…TPTT). 3 stretches are compositionally biased toward polar residues: residues 651–664 (IFGS…TSIP), 673–689 (PATS…TSAA), and 720–746 (TTES…TQPQ). An FXFG 1 repeat occupies 729–732 (FQFG). Over residues 753-768 (KPPSTETPTEKPATTS) the composition is skewed to low complexity. Residues 777 to 789 (PATTSSLFGSATT) show a composition bias toward polar residues. Low complexity predominate over residues 803 to 813 (TTTPADKPTTT). Over residues 814-828 (NLFGSTSTQATSGSD) the composition is skewed to polar residues. The FXFG 2 repeat unit spans residues 835 to 838 (FAFG). The span at 840–863 (TTESKPTTSLFGSTTPAPATSTEN) shows a compositional bias: polar residues. Residues 870–881 (ATTTSATPATNT) show a composition bias toward low complexity. Polar residues-rich tracts occupy residues 900–923 (GSST…STEQ), 940–961 (GSTS…TMTE), 968–987 (SIST…STTE), 998–1029 (STEQ…STEQ), and 1037–1055 (PAST…TTEN). Residues 910–913 (FQFG) form an FXFG 3 repeat. 4 FXFG repeats span residues 1074-1077 (FNFG), 1127-1130 (FNFG), 1141-1144 (FTFG), and 1152-1155 (FTFG). Disordered stretches follow at residues 1155-1174 (GASS…PIFS) and 1179-1217 (QPSS…KHVP). The span at 1156–1170 (ASSDSSNASNNASSA) shows a compositional bias: low complexity. Residues 1173 to 1176 (FSFG) form an FXFG 8 repeat. The segment covering 1179-1199 (QPSSTPLFGQNNPPAASNIFA) has biased composition (polar residues). The stretch at 1236–1239 (FTFG) is one FXFG 9 repeat. Positions 1240–1271 (GASSLATTPAASTPEPSAANAAAAGEDQGASA) are enriched in low complexity. Disordered regions lie at residues 1240-1335 (GASS…PWKV) and 1416-1463 (AALE…DEKK). One can recognise a RanBD1 domain in the interval 1289–1427 (GEEDESVVHE…LEEHKKANEK (139 aa)). Positions 1418–1463 (LEEHKKANEKKDGEKNEESEKKDEKQEEKKNEEKKDEKEEKKDEKK) are enriched in basic and acidic residues.

The nuclear pore complex (NPC) constitutes the exclusive means of nucleocytoplasmic transport. NPCs allow the passive diffusion of ions and small molecules and the active, nuclear transport receptor-mediated bidirectional transport of macromolecules such as proteins, RNAs, ribonucleoparticles (RNPs), and ribosomal subunits across the nuclear envelope. The 55-60 MDa NPC is composed of at least 28 different subunits: AMO1, ELYS, GLE1, GLE2, MLP1, NDC1, NIC96, NSP1, NUP133, NUP145, NUP152, NUP159, NUP170, NUP188, NUP192, NUP37, NUP49, NUP53, NUP56, NUP57, NUP82, NUP84, NUP85, POM152, POM33, POM34, SEC13 and SEH1. Due to its 8-fold rotational symmetry, all subunits are present with 8 copies or multiples thereof.

It is found in the nucleus. The protein resides in the nuclear pore complex. Its subcellular location is the nucleus membrane. Its function is as follows. Functions as a component of the nuclear pore complex (NPC). NPC components, collectively referred to as nucleoporins (NUPs), can play the role of both NPC structural components and of docking or interaction partners for transiently associated nuclear transport factors. Active directional transport is assured by both, a Phe-Gly (FG) repeat affinity gradient for these transport factors across the NPC and a transport cofactor concentration gradient across the nuclear envelope (GSP1 and GSP2 GTPases associated predominantly with GTP in the nucleus, with GDP in the cytoplasm). This Chaetomium thermophilum (strain DSM 1495 / CBS 144.50 / IMI 039719) (Thermochaetoides thermophila) protein is Nucleoporin NUP152 (NUP152).